The chain runs to 698 residues: Elongation factor G 1 (698 aa).

One can recognise a tr-type G domain in the interval 8–290 (ERYRNIGIVA…AVVDFLPAPI (283 aa)). GTP-binding positions include 17–24 (AHVDAGKT), 88–92 (DTPGH), and 142–145 (NKMD).

Belongs to the TRAFAC class translation factor GTPase superfamily. Classic translation factor GTPase family. EF-G/EF-2 subfamily.

It localises to the cytoplasm. Functionally, catalyzes the GTP-dependent ribosomal translocation step during translation elongation. During this step, the ribosome changes from the pre-translocational (PRE) to the post-translocational (POST) state as the newly formed A-site-bound peptidyl-tRNA and P-site-bound deacylated tRNA move to the P and E sites, respectively. Catalyzes the coordinated movement of the two tRNA molecules, the mRNA and conformational changes in the ribosome. In Shewanella frigidimarina (strain NCIMB 400), this protein is Elongation factor G 1.